The primary structure comprises 556 residues: Aplysianin-A (556 aa).

The N-terminal stretch at 1–19 (MAVRFLALGLLIFVTSCSG) is a signal peptide. Residues N150, N177, N374, N399, N414, and N430 are each glycosylated (N-linked (GlcNAc...) asparagine).

The protein to A.fulica achacin protein. As to quaternary structure, homotetramer. In terms of tissue distribution, albumen gland.

Functionally, has antibacterial activity against Gram-negative and Gram-positive bacteria. The protein is Aplysianin-A of Aplysia kurodai (Kuroda's sea hare).